We begin with the raw amino-acid sequence, 300 residues long: Glycine--tRNA ligase alpha subunit (300 aa).

The protein belongs to the class-II aminoacyl-tRNA synthetase family. Tetramer of two alpha and two beta subunits.

The protein localises to the cytoplasm. It carries out the reaction tRNA(Gly) + glycine + ATP = glycyl-tRNA(Gly) + AMP + diphosphate. The chain is Glycine--tRNA ligase alpha subunit from Prochlorococcus marinus (strain MIT 9313).